Here is a 355-residue protein sequence, read N- to C-terminus: N6-Methyl-AMP deaminase (355 aa).

Zn(2+) contacts are provided by His-24 and His-26. N(6)-methyl-AMP contacts are provided by residues His-26, Asn-28, His-74, 106–109, Asp-148, and Gly-181; that span reads STPR. Residue His-208 coordinates Zn(2+). N(6)-methyl-AMP-binding residues include Glu-211, Asp-293, and Asp-294. Glu-211 functions as the Proton donor in the catalytic mechanism. Asp-293 contributes to the Zn(2+) binding site.

The protein belongs to the metallo-dependent hydrolases superfamily. Adenosine and AMP deaminases family. In terms of assembly, monomer. It depends on Zn(2+) as a cofactor.

The catalysed reaction is N(6)-methyl-AMP + H2O + H(+) = IMP + methylamine. In terms of biological role, catalyzes the hydrolysis of the free cytosolic methylated adenosine nucleotide N(6)-methyl-AMP (N6-mAMP) to produce inositol monophosphate (IMP) and methylamine. Is required for the catabolism of cytosolic N6-mAMP, which is derived from the degradation of mRNA containing N6-methylated adenine (m6A). Catalyzes the removal of different alkyl groups not only from N6-substituted purine or 2-aminopurine nucleoside monophosphates but also from O6-substituted compounds in vitro. The polypeptide is N6-Methyl-AMP deaminase (Homo sapiens (Human)).